The chain runs to 312 residues: Photosystem I assembly protein Ycf4 (312 aa).

A run of 3 helical transmembrane segments spans residues 42 to 62, 91 to 111, and 113 to 133; these read WAFI…SSYF, IILF…GLFL, and FYLW…IYIY.

This sequence belongs to the Ycf4 family.

It localises to the plastid. The protein resides in the chloroplast thylakoid membrane. Functionally, seems to be required for the assembly of the photosystem I complex. The polypeptide is Photosystem I assembly protein Ycf4 (Pleurastrum terricola (Filamentous green alga)).